The sequence spans 291 residues: uncharacterized protein (291 aa).

In terms of domain architecture, HTH tetR-type spans 2-62; the sequence is KEKEKLIIET…SMLNYYYDKT (61 aa). The H-T-H motif DNA-binding region spans 25–44; sequence SVQEIAKECKISKGAFYIYF.

This is an uncharacterized protein from Bacillus subtilis (strain 168).